Here is a 105-residue protein sequence, read N- to C-terminus: Replication initiation control protein YabA (105 aa).

Residues His-79, Cys-81, Cys-95, and Cys-98 each coordinate Zn(2+).

This sequence belongs to the YabA family. As to quaternary structure, homotetramer. Interacts with both DnaA and DnaN, acting as a bridge between these two proteins. Zn(2+) serves as cofactor.

The protein resides in the cytoplasm. It is found in the nucleoid. In terms of biological role, involved in control of chromosome replication initiation. Inhibits the cooperative binding of DnaA to the oriC region, thus negatively regulating initiation of chromosome replication. Inhibits the ability of DnaA-ATP to form a helix on DNA; does not disassemble preformed DnaA-DNA helices. Decreases the residence time of DnaA on the chromosome at its binding sites (oriC, replication forks and promoter-binding sites). Tethers DnaA to the replication machinery via the DNA polymerase beta sliding clamp subunit (dnaN). Associates with oriC and other DnaA targets on the chromosome in a DnaA-dependent manner. This Streptococcus suis (strain 98HAH33) protein is Replication initiation control protein YabA.